The following is a 1062-amino-acid chain: Roc-COR-CHAT protease (1062 aa).

LRR repeat units follow at residues leucine 70 to glutamine 94, leucine 95 to proline 116, methionine 115 to lysine 141, leucine 142 to proline 159, alanine 160 to glycine 180, phenylalanine 181 to leucine 203, proline 204 to proline 226, and glycine 228 to serine 249. Residues aspartate 470–phenylalanine 660 enclose the COR domain. The disordered stretch occupies residues glutamate 836 to threonine 856. Catalysis depends on residues histidine 931 and cysteine 980.

A dedicated protease for substrate gasdermin bGSDM; cleaves the bGSDM precursor, releasing the pore-forming moiety, which integrates into the membrane and triggers cell death. Probably involved in defense against bacteriophages. Expression of bGSDM and this neighboring protease is highly toxic in E.coli. This is Roc-COR-CHAT protease from Unknown prokaryotic organism.